The following is a 150-amino-acid chain: Large ribosomal subunit protein bL9 (150 aa).

This sequence belongs to the bacterial ribosomal protein bL9 family.

Its function is as follows. Binds to the 23S rRNA. This chain is Large ribosomal subunit protein bL9, found in Neisseria meningitidis serogroup A / serotype 4A (strain DSM 15465 / Z2491).